The sequence spans 229 residues: Ras-related protein Rab-21 (229 aa).

GTP is bound at residue 23–30 (GEGAVGKT). An Effector region motif is present at residues 45 to 53 (HEQTLQASF). GTP contacts are provided by residues 71–75 (DTAGQ) and 129–132 (NKID). A disordered region spans residues 179-229 (EANPPSSSTPPESQRGAPSSHPPSQPRQRSTLIVTDDSEQPSPKQGGGCCS). Residues cysteine 227 and cysteine 228 are each lipidated (S-geranylgeranyl cysteine).

Belongs to the small GTPase superfamily. Rab family.

It localises to the golgi apparatus membrane. This is Ras-related protein Rab-21 (RAB21) from Geodia cydonium (Sponge).